The sequence spans 1033 residues: Collagen alpha-2(I) chain (1033 aa).

Residues 1–1033 (SGGFDFSFLP…FGYEGDFYRA (1033 aa)) are disordered. 3 stretches are compositionally biased toward low complexity: residues 25–71 (LGPG…ARGP), 154–175 (SRGS…SAGP), and 221–242 (PGAN…AGAP). The span at 276-285 (GESGGKGEPG) shows a compositional bias: gly residues. Low complexity predominate over residues 286 to 296 (SAGPQGPPGSS). Positions 318-327 (GLRGGPGSRG) are enriched in gly residues. Low complexity-rich tracts occupy residues 340 to 356 (PAGA…RGPS) and 391 to 410 (LPGI…RGEA). The span at 459–468 (GVQGGKGEQG) shows a compositional bias: gly residues. Composition is skewed to low complexity over residues 519 to 528 (PSGAIGSRGP) and 540 to 550 (EPGVVGAPGTA). Residues 551–560 (GPAGSGGLPG) are compositionally biased toward gly residues. 2 stretches are compositionally biased toward low complexity: residues 583-627 (VGTT…PRGS) and 634-654 (VGPA…QPGA). The span at 655–664 (KGERGTKGPK) shows a compositional bias: basic and acidic residues. Over residues 672 to 682 (PTGPVGSAGPA) the composition is skewed to low complexity. Residues 692–701 (GSRGDGGPPG) show a composition bias toward gly residues. A compositionally biased stretch (low complexity) spans 703–712 (TGFPGAAGRT). Positions 749–758 (GETGAGGPPG) are enriched in gly residues. Composition is skewed to low complexity over residues 766-793 (SGEP…LGLP) and 801-811 (LPGVAGAVGEP). The segment covering 812-834 (GPLGIGPPGARGPSGGVGPGVNG) has biased composition (gly residues). Residues 873–909 (AAGAPGPHGAVGPAGKHGNRGEPGPVGSAGPVGALGP) show a composition bias toward low complexity. Residues 919-930 (RGDKGEAGDKGP) show a composition bias toward basic and acidic residues. Positions 1003–1015 (SGPPGPPGPPGPP) are enriched in pro residues.

This sequence belongs to the fibrillar collagen family. As to quaternary structure, trimers of one alpha 2(I) and two alpha 1(I) chains. Interacts (via C-terminus) with TMEM131 (via PapD-L domain); the interaction is direct and is involved in assembly and TRAPPIII ER-to-Golgi transport complex-dependent secretion of collagen. Prolines at the third position of the tripeptide repeating unit (G-X-Y) are hydroxylated in some or all of the chains. Expressed in bone.

It is found in the secreted. Its subcellular location is the extracellular space. The protein resides in the extracellular matrix. Its function is as follows. Type I collagen is a member of group I collagen (fibrillar forming collagen). This is Collagen alpha-2(I) chain from Mylodon darwinii (Giant ground sloth).